An 87-amino-acid chain; its full sequence is Hemocyanin alpha chain (87 aa).

This sequence belongs to the tyrosinase family. Hemocyanin subfamily. Polymer that contains six different types of chains (alpha, beta, gamma, delta, epsilon, and zeta). In terms of tissue distribution, hemolymph.

It localises to the secreted. The protein resides in the extracellular space. Functionally, hemocyanins are copper-containing oxygen carriers occurring freely dissolved in the hemolymph of many mollusks and arthropods. The sequence is that of Hemocyanin alpha chain from Tachypleus tridentatus (Japanese horseshoe crab).